We begin with the raw amino-acid sequence, 160 residues long: uncharacterized protein (160 aa).

This is an uncharacterized protein from Gracula (BFDV).